The primary structure comprises 200 residues: Signal peptidase complex catalytic subunit SEC11 (200 aa).

Over 1–15 (MFAELAPYLSNPRQT) the chain is Cytoplasmic. The helical; Signal-anchor for type II membrane protein transmembrane segment at 16 to 33 (LAQILNFALVLSTAFMGW) threads the bilayer. Topologically, residues 34 to 200 (KALSVYTNSS…MGVMVMLQRE (167 aa)) are lumenal. An N-linked (GlcNAc...) asparagine glycan is attached at N41. Residues S53 and H92 each act as charge relay system in the active site. Residues 101-131 (GDGGKKSQRRLEKEADKRSGPGLSSPISHQM) form a disordered region. The span at 103–119 (GGKKSQRRLEKEADKRS) shows a compositional bias: basic and acidic residues. The Charge relay system role is filled by D142. The segment at 186 to 197 (VLLGIMGVMVML) is C-terminal short (CTS) helix.

This sequence belongs to the peptidase S26B family. As to quaternary structure, component of the signal peptidase complex (SPC) composed of a catalytic subunit SEC11 and three accessory subunits SPC1, SPC2 and SPC3. The complex induces a local thinning of the ER membrane which is used to measure the length of the signal peptide (SP) h-region of protein substrates. This ensures the selectivity of the complex towards h-regions shorter than 18-20 amino acids. SPC associates with the translocon complex.

The protein resides in the endoplasmic reticulum membrane. It carries out the reaction Cleavage of hydrophobic, N-terminal signal or leader sequences from secreted and periplasmic proteins.. In terms of biological role, catalytic component of the signal peptidase complex (SPC) which catalyzes the cleavage of N-terminal signal sequences from nascent proteins as they are translocated into the lumen of the endoplasmic reticulum. Specifically cleaves N-terminal signal peptides that contain a hydrophobic alpha-helix (h-region) shorter than 18-20 amino acids. This is Signal peptidase complex catalytic subunit SEC11 (SEC11) from Arthroderma gypseum (strain ATCC MYA-4604 / CBS 118893) (Microsporum gypseum).